The chain runs to 337 residues: Protoheme IX farnesyltransferase (337 aa).

The span at 1–17 shows a compositional bias: polar residues; that stretch reads MPFSISKDTVSNQTTHV. Positions 1 to 41 are disordered; it reads MPFSISKDTVSNQTTHVATAPASQRPDPVETKVEQEQGRPR. The segment covering 27 to 41 has biased composition (basic and acidic residues); the sequence is DPVETKVEQEQGRPR. 8 consecutive transmembrane segments (helical) span residues 59 to 79, 81 to 101, 130 to 150, 153 to 173, 196 to 216, 250 to 270, 271 to 291, and 311 to 331; these read IIEL…HGVP, LGLV…ANVF, SALI…GFGA, LSAA…SMLL, WTAV…IVFW, VAIQ…VLWP, VAHM…VFIV, and PMGL…AIAV.

This sequence belongs to the UbiA prenyltransferase family. Protoheme IX farnesyltransferase subfamily.

It is found in the cell membrane. It carries out the reaction heme b + (2E,6E)-farnesyl diphosphate + H2O = Fe(II)-heme o + diphosphate. Its pathway is porphyrin-containing compound metabolism; heme O biosynthesis; heme O from protoheme: step 1/1. Functionally, converts heme B (protoheme IX) to heme O by substitution of the vinyl group on carbon 2 of heme B porphyrin ring with a hydroxyethyl farnesyl side group. The protein is Protoheme IX farnesyltransferase of Cutibacterium acnes (strain DSM 16379 / KPA171202) (Propionibacterium acnes).